The primary structure comprises 506 residues: 5'-3' exonuclease PLD4 (506 aa).

The helical transmembrane segment at 31–51 (LQVLGALAVLWLGSVALICLL) threads the bilayer. Cysteines 94 and 250 form a disulfide. N-linked (GlcNAc...) asparagine glycans are attached at residues N150 and N171. One can recognise a PLD phosphodiesterase 1 domain in the interval 209–236 (TRGVLHSKFWVVDGRHIYMGSANMDWRS). H214 acts as the Proton donor in catalysis. Active-site residues include K216 and D221. N-linked (GlcNAc...) asparagine glycans are attached at residues N249, N281, N403, N417, and N427. An intrachain disulfide couples C379 to C502. The 27-residue stretch at 423-449 (FSRVNHSKFMVTEKAAYIGTSNWSEDY) folds into the PLD phosphodiesterase 2 domain. Catalysis depends on H428, which acts as the Nucleophile. N-linked (GlcNAc...) asparagine glycosylation occurs at N444.

The protein belongs to the phospholipase D family. In terms of assembly, homodimer. Post-translationally, highly N-glycosylated. Expressed in plasmacytoid dendritic cells and monocytes (at protein level).

The protein resides in the endoplasmic reticulum membrane. It is found in the golgi apparatus. The protein localises to the trans-Golgi network membrane. Its subcellular location is the nucleus. It localises to the early endosome. The protein resides in the cytoplasmic vesicle. It is found in the phagosome. The protein localises to the lysosome. It catalyses the reaction Exonucleolytic cleavage in the 5'- to 3'-direction to yield nucleoside 3'-phosphates.. It carries out the reaction a 5'-end 5'-dephospho-ribonucleotidyl-ribonucleotide-RNA + H2O = a ribonucleoside 3'-phosphate + a 5'-end dephospho-ribonucleoside-RNA + H(+). The catalysed reaction is a ribonucleoside 3'-phosphate-2'-3'-cyclophospho-GMP + H2O = a ribonucleoside 3'-phosphate + 2',3'-cyclophospho-GMP + H(+). The enzyme catalyses a 5'-end 5'-dephospho-2'-deoxyribonucleotidyl-2'-deoxyribonucleotide in single-stranded DNA + H2O = a 5'-end dephospho-2'-deoxyribonucleoside in single-stranded DNA + a 2'-deoxyribonucleoside 3'-phosphate + H(+). It catalyses the reaction a 5'-end 5'-phospho-2'-deoxyribonucleotide in single-stranded DNA + H2O = a 5'-end 5'-dephospho-2'-deoxyribonucleotide in single-stranded DNA + phosphate. It carries out the reaction a 3-lyso-sn-glycero-1-phospho-(3'-acyl-1'-sn-glycerol) + a 1-acyl-sn-glycerol = a 3-acyl-sn-glycero-1-phospho-(3'-acyl-1'-sn-glycerol) + glycerol. The catalysed reaction is 3-lyso-sn-glycero-1-phospho-(3'-(9Z-octadecenoyl)-1'-sn-glycerol) + 1-(9Z-octadecenoyl)-sn-glycerol = 3-(9Z-octadecenoyl)-sn-glycero-1-phospho-(3'-(9Z-octadecenoyl)-1'-sn-glycerol) + glycerol. With respect to regulation, the exonuclease activity toward ssDNA substrate is Ca(2+) and Mg(2+)-independent, but it is inhibited by Fe(2+), Cu(2+) and to a lesser extent Zn(2+) ions. 5'-&gt;3' exonuclease that hydrolyzes the phosphodiester bond of single-stranded DNA (ssDNA) and RNA molecules to form nucleoside 3'-monophosphates and 5'-end 5'-hydroxy deoxyribonucleotide/ribonucleotide fragments. Partially redundant with PLD3, can cleave all four nucleotides displaying higher efficiency for ssDNA and RNA fragments initiated with uridine and guanosine residues and lower efficiency for cytidine-initiated substrates. As a result, it does not always degrade polynucleotides to the single nucleotide level, it can stall at specific sites sparing certain fragments from exonucleolytic degradation. Processes self and pathogenic ssDNA and RNA molecules that reach the endolysosomal compartment via phagocytosis or autophagy and may serve as 'danger' signals for recognition by innate immune receptors such as toll-like receptors (TLRs). Degrades mitochondrial CpG-rich ssDNA fragments to prevent TLR9 activation and autoinflammatory response, but it can cleave viral RNA to generate ligands for TLR7 activation and initiate antiviral immune responses. In plasmacytoid dendritic cells, it cooperates with endonuclease RNASET2 to release 2',3'-cyclic guanosine monophosphate (2',3'-cGMP), a potent stimulatory ligand for TLR7. Produces 2',3'-cGMPs and cytidine-rich RNA fragments that occupy TLR7 ligand-binding pockets and trigger a signaling-competent state. Can exert polynucleotide phosphatase activity toward 5'-phosphorylated ssDNA substrates although at a slow rate. Transphosphatidylase that catalyzes the exchange with R to S stereo-inversion of the glycerol moiety between (S,R)-lysophosphatidylglycerol (LPG) and monoacylglycerol (MAG) substrates to yield (S,S)-bis(monoacylglycero)phosphate (BMP). Can synthesize a variety of (S,S)-BMPs representing the main phospholipid constituent of lysosomal intralumenal vesicle (ILV) membranes that bind acid hydrolases for lipid degradation. Regulates the homeostasis and interorganellar communication of the endolysosomal system with an overall impact on cellular removal of dysfunctional organelles via autophagy as well as proper protein and lipid turnover. May play a role in myotube formation in response to ER stress. In Homo sapiens (Human), this protein is 5'-3' exonuclease PLD4.